We begin with the raw amino-acid sequence, 244 residues long: 5-oxoprolinase subunit A (244 aa).

The protein belongs to the LamB/PxpA family. As to quaternary structure, forms a complex composed of PxpA, PxpB and PxpC.

It catalyses the reaction 5-oxo-L-proline + ATP + 2 H2O = L-glutamate + ADP + phosphate + H(+). Catalyzes the cleavage of 5-oxoproline to form L-glutamate coupled to the hydrolysis of ATP to ADP and inorganic phosphate. This is 5-oxoprolinase subunit A from Escherichia coli (strain SE11).